The primary structure comprises 520 residues: MECPHLSSSVCIAPDSAKFPNGSPSSWCCSVCRSNKSPWVCLTCSSVHCGRYVNGHAKKHYEDAQVPLTNHKKSEKQDKVQHTVCMDCSSYSTYCYRCDDFVVNDTKLGLVQKVREHLQNLENSAFTADRHKKRKLLENSTLNSKLLKVNGSTTAICATGLRNLGNTCFMNAILQSLSNIEQFCCYFKELPAVELRNGKTAGRRTYHTRSQGDNNVSLVEEFRKTLCALWQGSQTAFSPESLFYVVWKIMPNFRGYQQQDAHEFMRYLLDHLHLELQGGFNGVSRSAILQENSTLSASNKCCINGASTVVTAIFGGILQNEVNCLICGTESRKFDPFLDLSLDIPSQFRSKRSKNQENGPVCSLRDCLRSFTDLEELDETELYMCHKCKKKQKSTKKFWIQKLPKVLCLHLKRFHWTAYLRNKVDTYVEFPLRGLDMKCYLLEPENSGPESCLYDLAAVVVHHGSGVGSGHYTAYATHEGRWFHFNDSTVTLTDEETVVKAKAYILFYVEHQAKAGSDKL.

Position 1 is an N-acetylmethionine (Met1). A UBP-type zinc finger spans residues 1-121; that stretch reads MECPHLSSSV…QKVREHLQNL (121 aa). Residues Cys3, His5, Cys29, Cys32, Cys41, Cys44, Cys49, His56, His60, His82, Cys95, and Cys98 each contribute to the Zn(2+) site. The USP domain occupies 159-511; the sequence is TGLRNLGNTC…KAYILFYVEH (353 aa). The Nucleophile role is filled by Cys168. The active-site Proton acceptor is the His471.

Belongs to the peptidase C19 family. USP3 subfamily. In terms of assembly, interacts (via UBP-type domain) with H2A; the interaction is less efficient than with monoubiquitinated H2A. Expressed in all tissues examined, with strongest expression in pancreas.

The protein localises to the nucleus. Its subcellular location is the cytoplasm. It carries out the reaction Thiol-dependent hydrolysis of ester, thioester, amide, peptide and isopeptide bonds formed by the C-terminal Gly of ubiquitin (a 76-residue protein attached to proteins as an intracellular targeting signal).. Deubiquitinase that plays a role in several cellular processes including transcriptional regulation, cell cycle progression or innate immunity. In response to DNA damage, deubiquitinates monoubiquitinated target proteins such as histone H2A and H2AX and thereby counteracts RNF168- and RNF8-mediated ubiquitination. In turn, participates in the recruitment of DNA damage repair factors to DNA break sites. Required for proper progression through S phase and subsequent mitotic entry. Acts as a positive regulator of TP53 by deubiquitinating and stabilizing it to promote normal cell proliferation and transformation. Participates in establishing tolerance innate immune memory through non-transcriptional feedback. Mechanistically, negatively regulates TLR-induced NF-kappa-B signaling by targeting and removing the 'Lys-63'-linked polyubiquitin chains on MYD88. Negatively regulates the activation of type I interferon signaling by mediating 'Lys-63'-linked polyubiquitin chains on RIGI and IFIH1. Also deubiquinates ASC/PYCARD, the central adapter mediating the assembly and activation of most inflammasomes, and thereby promotes inflammasome activation. This is Ubiquitin carboxyl-terminal hydrolase 3 (USP3) from Homo sapiens (Human).